A 482-amino-acid chain; its full sequence is Cilia- and flagella-associated protein 53 (482 aa).

Coiled-coil stretches lie at residues 9 to 40 (DARI…AVAE), 67 to 124 (ADLN…QALA), and 152 to 413 (IEER…AKDA). Positions 462–482 (VNQTLSSTDPPVWHGRRKFDW) are disordered.

It belongs to the CFAP53 family.

Its subcellular location is the cell projection. The protein resides in the cilium. The protein localises to the flagellum. Its function is as follows. May play a role in filopodium movement. The polypeptide is Cilia- and flagella-associated protein 53 (Chlamydomonas reinhardtii (Chlamydomonas smithii)).